Consider the following 364-residue polypeptide: GTPase Obg (364 aa).

Residues 1–161 enclose the Obg domain; that stretch reads MRFVDEVTIS…KYLRLELKIL (161 aa). One can recognise an OBG-type G domain in the interval 162–334; sequence ADAGIIGLPN…LVDAIWKLQS (173 aa). GTP contacts are provided by residues 168-175, 193-197, 217-220, 287-290, and 315-317; these read GLPNAGKS, FTTLN, DIPG, NKID, and SAE. Mg(2+) is bound by residues S175 and T195.

Belongs to the TRAFAC class OBG-HflX-like GTPase superfamily. OBG GTPase family. As to quaternary structure, monomer. The cofactor is Mg(2+).

The protein localises to the cytoplasm. In terms of biological role, an essential GTPase which binds GTP, GDP and possibly (p)ppGpp with moderate affinity, with high nucleotide exchange rates and a fairly low GTP hydrolysis rate. Plays a role in control of the cell cycle, stress response, ribosome biogenesis and in those bacteria that undergo differentiation, in morphogenesis control. The chain is GTPase Obg from Lawsonia intracellularis (strain PHE/MN1-00).